Reading from the N-terminus, the 857-residue chain is Putative serine/threonine-protein kinase receptor (857 aa).

Positions M1–Y32 are cleaved as a signal peptide. Residues I33 to K446 lie on the Extracellular side of the membrane. A Bulb-type lectin domain is found at T35–W155. Residues N47, N120, N196, N260, N389, and N442 are each glycosylated (N-linked (GlcNAc...) asparagine). The PAN domain maps to C350–A433. Cystine bridges form between C380–C405 and C388–C390. The chain crosses the membrane as a helical span at residues I447–W466. The Cytoplasmic portion of the chain corresponds to K467–R857. Residues F528 to L779 form the Protein kinase domain. ATP is bound by residues L534–V542 and K556. D653 acts as the Proton acceptor in catalysis.

This sequence belongs to the protein kinase superfamily. Ser/Thr protein kinase family. As to expression, predominantly in the pistil and anther.

The protein resides in the membrane. It carries out the reaction L-seryl-[protein] + ATP = O-phospho-L-seryl-[protein] + ADP + H(+). It catalyses the reaction L-threonyl-[protein] + ATP = O-phospho-L-threonyl-[protein] + ADP + H(+). Its function is as follows. Involved in sporophytic self-incompatibility system (the inability of flowering plants to achieve self-fertilization), probably acting in combination with S-locus-specific glycoproteins. Interaction with a ligand in the extracellular domain triggers the protein kinase activity of the cytoplasmic domain. The sequence is that of Putative serine/threonine-protein kinase receptor (SRK6) from Brassica oleracea var. viridis (Flowering kale).